The sequence spans 250 residues: High affinity immunoglobulin epsilon receptor subunit alpha (250 aa).

The signal sequence occupies residues 1–23 (MVTGRSAQLCLALLFMSLDVILT). The Extracellular segment spans residues 24–204 (ATEKSVLTLD…AYKCKYYWLQ (181 aa)). The Ig-like 1 domain occupies 28–104 (SVLTLDPPWI…QGLFKSKPVY (77 aa)). Residues C49 and C92 are joined by a disulfide bond. N-linked (GlcNAc...) asparagine glycosylation is found at N58, N66, N73, N106, N152, and N167. An Ig-like 2 domain is found at 114-181 (LQTSADMVLV…YHCKGYLRQV (68 aa)). An intrachain disulfide couples C131 to C174. Residues 205 to 223 (LIFPLLVAILFAVDTGLLL) form a helical membrane-spanning segment. Residues 224–250 (STEEQFKSVLEIQKTGKYKKVETELLT) are Cytoplasmic-facing.

In terms of assembly, tetramer of an alpha chain, a beta chain, and two disulfide linked gamma chains. Interacts with IGHE (via CH3 region). Expressed in bone marrow mast cells, as well as in the pineal gland at night.

It localises to the cell membrane. Its function is as follows. High-affinity receptor for immunoglobulin epsilon/IgE. Mediates IgE effector functions in myeloid cells. Upon IgE binding and antigen/allergen cross-linking initiates signaling pathways that lead to myeloid cell activation and differentiation. On mast cells, basophils and eosinophils stimulates the secretion of vasoactive amines, lipid mediators and cytokines that contribute to inflammatory response, tissue remodeling and cytotoxicity against microbes. Triggers the immediate hypersensitivity response to allergens as a host defense mechanism against helminth parasites, pathogenic bacteria and venom toxicity. When dysregulated, it can elicit harmful life-threatening allergic and anaphylactic reactions. The chain is High affinity immunoglobulin epsilon receptor subunit alpha (Fcer1a) from Mus musculus (Mouse).